Reading from the N-terminus, the 401-residue chain is Enolase (401 aa).

Glutamine 154 is a binding site for (2R)-2-phosphoglycerate. Catalysis depends on glutamate 197, which acts as the Proton donor. Mg(2+)-binding residues include aspartate 233, glutamate 274, and aspartate 301. Positions 326, 355, 356, and 377 each coordinate (2R)-2-phosphoglycerate. Lysine 326 (proton acceptor) is an active-site residue.

Belongs to the enolase family. It depends on Mg(2+) as a cofactor.

It localises to the cytoplasm. The protein localises to the secreted. It is found in the cell surface. It catalyses the reaction (2R)-2-phosphoglycerate = phosphoenolpyruvate + H2O. Its pathway is carbohydrate degradation; glycolysis; pyruvate from D-glyceraldehyde 3-phosphate: step 4/5. Its function is as follows. Catalyzes the reversible conversion of 2-phosphoglycerate (2-PG) into phosphoenolpyruvate (PEP). It is essential for the degradation of carbohydrates via glycolysis. This Thermoplasma acidophilum (strain ATCC 25905 / DSM 1728 / JCM 9062 / NBRC 15155 / AMRC-C165) protein is Enolase.